The chain runs to 387 residues: 3-ketoacyl-CoA thiolase (387 aa).

Cys-91 acts as the Acyl-thioester intermediate in catalysis. Catalysis depends on proton acceptor residues His-343 and Cys-373.

The protein belongs to the thiolase-like superfamily. Thiolase family. Heterotetramer of two alpha chains (FadB) and two beta chains (FadA).

The protein resides in the cytoplasm. The enzyme catalyses an acyl-CoA + acetyl-CoA = a 3-oxoacyl-CoA + CoA. It functions in the pathway lipid metabolism; fatty acid beta-oxidation. Functionally, catalyzes the final step of fatty acid oxidation in which acetyl-CoA is released and the CoA ester of a fatty acid two carbons shorter is formed. This is 3-ketoacyl-CoA thiolase from Aliivibrio fischeri (strain ATCC 700601 / ES114) (Vibrio fischeri).